A 449-amino-acid chain; its full sequence is Chromogranin-A (449 aa).

The first 18 residues, 1-18, serve as a signal peptide directing secretion; the sequence is MRSAAVLALLLCAGQVIA. Cys35 and Cys56 are oxidised to a cystine. Positions 87–431 are disordered; the sequence is AKERTHQQKK…EDQELESLSA (345 aa). Ser99 carries the phosphoserine modification. The span at 107 to 140 shows a compositional bias: basic and acidic residues; sequence VLEKPNDQAEPKEVTEEVSSKDAAEKRDDFKEVE. Ser142 is modified (phosphoserine). A glycan (O-linked (GalNAc...) serine) is linked at Ser185. Tyr191 carries the post-translational modification Phosphotyrosine. Ser200 is subject to Phosphoserine. An O-linked (GalNAc...) serine glycan is attached at Ser204. Ser215 carries the post-translational modification Phosphoserine. Basic and acidic residues predominate over residues 233 to 242; sequence EAEAREKAVP. Thr249 carries an O-linked (GalNAc...) threonine glycan. Over residues 279–297 the composition is skewed to basic and acidic residues; that stretch reads GAEEAKPPEGKGEWAHSRQ. Position 295 is a phosphoserine (Ser295). Gly312 is subject to Glycine amide. Ser315, Ser325, and Ser363 each carry phosphoserine. A compositionally biased stretch (basic and acidic residues) spans 323–351; it reads QLSKEWEDAKRWSKMDQLAKELTAEKRLE. A Methionine sulfoxide modification is found at Met364. 4 positions are modified to phosphoserine: Ser390, Ser394, Ser416, and Ser430. Residues 406–423 are compositionally biased toward basic and acidic residues; that stretch reads YPEEKKEEEGSANRRPED. Ser416 carries O-linked (Xyl...) (chondroitin sulfate) serine glycosylation.

This sequence belongs to the chromogranin/secretogranin protein family. In terms of assembly, self-interacts; self-assembly is promoted in vitro by chondroitin sulfate attachment which occurs at mildly acidic pH conditions. Interacts with SCG3. Interacts with ITPR1 in the secretory granules. In secretory granules, is attacked at both N- and C-terminal sides by proteolytic enzymes generating numerous peptides of various activities. Proteolytic processing can give rise to additional longer forms of catestatin peptides which display a less potent catecholamine release-inhibitory activity. In terms of processing, O-glycosylated; contains chondroitin sulfate (CS). CS attachment is pH-dependent, being observed at mildly acidic conditions of pH 5 but not at neutral pH, and promotes self-assembly in vitro. In terms of tissue distribution, highest concentration of GE-25 found in adrenal medulla with lower levels present in the pituitary, the intestinal mucosa and the pancreas. Also found in the brain.

It localises to the secreted. It is found in the cytoplasmic vesicle. Its subcellular location is the secretory vesicle. The protein resides in the neuronal dense core vesicle. Its function is as follows. Strongly inhibits glucose induced insulin release from the pancreas. In terms of biological role, completely inhibits catecholamine release from chromaffin cells. Has antibacterial activity against M.luteus. Not active against E.coli. Functionally, inhibits catecholamine release from chromaffin cells and noradrenergic neurons by acting as a non-competitive nicotinic cholinergic antagonist. Displays antibacterial activity against Gram-positive bacteria M.luteus and B.megaterium, and Gram-negative bacteria E.coli, and antifungal activity against a variety of filamentous fungi including A.fumigatus, N.hematococca, F.culmorum, F.oxyporum, T.mentagrophytes and several forms of Candida: C.albicans, C.tropicalis, C.glabrata and C.neoform. Can induce mast cell migration, degranulation and production of cytokines and chemokines. Its function is as follows. Has antibacterial activity against Gram-positive bacteria M.luteus, B.megaterium. Not active against Gram-positive bacteria B.cereus, B.subtilis, S.pyogenes, M.fortuitum, S.aureus and L.monocytogenes and against Gram-negative bacteria E.coli, E.cloacae, S.typhimurium, K.pneumoniae and P.aeruginosa. Possesses antifungal activity against N.crassa, A.fumigatus, A.brassicicola, N.hematococca, F.culmorum and F.oxyporum and against the yeast S.cerevisiae and C.albicans. Inactive against A.benhamiae. In terms of biological role, has antifungal activity against N.crassa, A.fumigatus, A.brassicicola, N.hematococca, F.culmorum, F.oxyporum, A.benhamiae, C.neoformans, as well as against yeasts C.albicans, and C.tropicalis. Seems to be inactive against C.glabrata. Interacts with the fungal cell wall, crosses the plasma membrane and accumulates in fungal cells where it inhibits calcineurin activity. Regulates granule biogenesis in endocrine cells by up-regulating the transcription of protease nexin 1 (SERPINE2) via a cAMP-PKA-SP1 pathway. This leads to inhibition of granule protein degradation in the Golgi complex which in turn promotes granule formation. The chain is Chromogranin-A (CHGA) from Bos taurus (Bovine).